Consider the following 547-residue polypeptide: Chaperonin GroEL (547 aa).

ATP contacts are provided by residues 30 to 33 (TLGP), K51, 87 to 91 (DGTTT), G415, and D496. Residues 528 to 547 (KEEPMPMRGSGMGGMGGMDF) are disordered. The segment covering 537–547 (SGMGGMGGMDF) has biased composition (gly residues).

The protein belongs to the chaperonin (HSP60) family. In terms of assembly, forms a cylinder of 14 subunits composed of two heptameric rings stacked back-to-back. Interacts with the co-chaperonin GroES.

The protein resides in the cytoplasm. It catalyses the reaction ATP + H2O + a folded polypeptide = ADP + phosphate + an unfolded polypeptide.. Together with its co-chaperonin GroES, plays an essential role in assisting protein folding. The GroEL-GroES system forms a nano-cage that allows encapsulation of the non-native substrate proteins and provides a physical environment optimized to promote and accelerate protein folding. The protein is Chaperonin GroEL of Rickettsia canadensis (strain McKiel).